The sequence spans 86 residues: Toxin TdNa7 (86 aa).

The signal sequence occupies residues M1–C20. The region spanning K21 to G83 is the LCN-type CS-alpha/beta domain. 4 cysteine pairs are disulfide-bonded: C31/C82, C35/C57, C43/C63, and C47/C65. At K84 the chain carries Lysine amide.

It belongs to the long (4 C-C) scorpion toxin superfamily. Sodium channel inhibitor family. Beta subfamily. As to expression, expressed by the venom gland.

The protein resides in the secreted. Its function is as follows. Beta toxins bind voltage-independently at site-4 of sodium channels (Nav) and shift the voltage of activation toward more negative potentials thereby affecting sodium channel activation and promoting spontaneous and repetitive firing. This Tityus discrepans (Venezuelan scorpion) protein is Toxin TdNa7.